The following is an 84-amino-acid chain: Translational regulator CsrA (84 aa).

The protein belongs to the CsrA/RsmA family. Homodimer; the beta-strands of each monomer intercalate to form a hydrophobic core, while the alpha-helices form wings that extend away from the core.

It localises to the cytoplasm. In terms of biological role, a translational regulator that binds mRNA to regulate translation initiation and/or mRNA stability. Usually binds in the 5'-UTR at or near the Shine-Dalgarno sequence preventing ribosome-binding, thus repressing translation. Its main target seems to be the major flagellin gene, while its function is anatagonized by FliW. The sequence is that of Translational regulator CsrA from Leptospira interrogans serogroup Icterohaemorrhagiae serovar Lai (strain 56601).